The sequence spans 369 residues: Protein RecA (369 aa).

The segment covering 1 to 10 has biased composition (basic and acidic residues); that stretch reads MARTTDDSKK. The tract at residues 1–20 is disordered; that stretch reads MARTTDDSKKAAPAAGTADE. 82–89 is a binding site for ATP; it reads GPESSGKT. Positions 350 to 369 are disordered; the sequence is PAAAVAAPDEGDDDLGDEEV. The span at 358–369 shows a compositional bias: acidic residues; the sequence is DEGDDDLGDEEV.

The protein belongs to the RecA family.

It is found in the cytoplasm. Can catalyze the hydrolysis of ATP in the presence of single-stranded DNA, the ATP-dependent uptake of single-stranded DNA by duplex DNA, and the ATP-dependent hybridization of homologous single-stranded DNAs. It interacts with LexA causing its activation and leading to its autocatalytic cleavage. The protein is Protein RecA of Gloeobacter violaceus (strain ATCC 29082 / PCC 7421).